A 578-amino-acid polypeptide reads, in one-letter code: Zinc finger protein with KRAB and SCAN domains 8 (578 aa).

The segment at 1-20 (MAEESRKPSAPSPPDQTPEE) is disordered. Residue Ser12 is modified to Phosphoserine. Lys26 participates in a covalent cross-link: Glycyl lysine isopeptide (Lys-Gly) (interchain with G-Cter in SUMO2). An SCAN box domain is found at 51 to 133 (RLRFRQLCYQ…TLLEDLERQI (83 aa)). The interval 158-205 (ASAPEPPNTQLQSEATQHKSPVPQESQERSMSTSQSPTRSQKGSSGDQ) is disordered. The segment covering 165–205 (NTQLQSEATQHKSPVPQESQERSMSTSQSPTRSQKGSSGDQ) has biased composition (polar residues). Glycyl lysine isopeptide (Lys-Gly) (interchain with G-Cter in SUMO2) cross-links involve residues Lys176 and Lys199. The residue at position 201 (Ser201) is a Phosphoserine. The KRAB domain maps to 220–316 (EKIEDMAVSL…GRLERQRGNP (97 aa)). Glycyl lysine isopeptide (Lys-Gly) (interchain with G-Cter in SUMO2) cross-links involve residues Lys221, Lys272, and Lys288. 2 C2H2-type zinc fingers span residues 322-344 (HKCD…WRIH) and 350-372 (YQCN…QDIH). Glycyl lysine isopeptide (Lys-Gly) (interchain with G-Cter in SUMO2) cross-links involve residues Lys374 and Lys376. 7 consecutive C2H2-type zinc fingers follow at residues 378 to 400 (YHCK…QRIH), 406 to 428 (YQCN…QRIH), 434 to 456 (YECN…QRIH), 462 to 484 (YECD…QRSH), 490 to 512 (YKCN…QRIH), 518 to 540 (YKCK…LRIH), and 546 to 568 (YQCN…QRIH). Residues Lys413 and Lys441 each participate in a glycyl lysine isopeptide (Lys-Gly) (interchain with G-Cter in SUMO2) cross-link. A Glycyl lysine isopeptide (Lys-Gly) (interchain with G-Cter in SUMO2) cross-link involves residue Lys502. A Glycyl lysine isopeptide (Lys-Gly) (interchain with G-Cter in SUMO2) cross-link involves residue Lys572.

Belongs to the krueppel C2H2-type zinc-finger protein family.

The protein resides in the nucleus. Its function is as follows. May be involved in transcriptional regulation. This chain is Zinc finger protein with KRAB and SCAN domains 8 (ZKSCAN8), found in Pan paniscus (Pygmy chimpanzee).